The primary structure comprises 406 residues: Exodeoxyribonuclease 7 large subunit (406 aa).

It belongs to the XseA family. Heterooligomer composed of large and small subunits.

Its subcellular location is the cytoplasm. It carries out the reaction Exonucleolytic cleavage in either 5'- to 3'- or 3'- to 5'-direction to yield nucleoside 5'-phosphates.. Bidirectionally degrades single-stranded DNA into large acid-insoluble oligonucleotides, which are then degraded further into small acid-soluble oligonucleotides. The sequence is that of Exodeoxyribonuclease 7 large subunit from Desulforudis audaxviator (strain MP104C).